Reading from the N-terminus, the 336-residue chain is N-acetyl-gamma-glutamyl-phosphate reductase (336 aa).

Residue Cys143 is part of the active site.

The protein belongs to the NAGSA dehydrogenase family. Type 1 subfamily.

The protein resides in the cytoplasm. The catalysed reaction is N-acetyl-L-glutamate 5-semialdehyde + phosphate + NADP(+) = N-acetyl-L-glutamyl 5-phosphate + NADPH + H(+). The protein operates within amino-acid biosynthesis; L-arginine biosynthesis; N(2)-acetyl-L-ornithine from L-glutamate: step 3/4. Functionally, catalyzes the NADPH-dependent reduction of N-acetyl-5-glutamyl phosphate to yield N-acetyl-L-glutamate 5-semialdehyde. The protein is N-acetyl-gamma-glutamyl-phosphate reductase of Dictyoglomus thermophilum (strain ATCC 35947 / DSM 3960 / H-6-12).